The primary structure comprises 267 residues: MTFGKALLKISRQGEHARIWEYSQAPLQWLGSPGEPPLYYLRNPNGGLLGGDRHHIAIELGAGAGLAIRTQGATRLHPGLIRQQAKVKLAPTSQLIWIPHPTIPGAGADFRQQVQIELDPSARLAYAEIWTAGRLAMGECWQFRRLSSSLRVWVAAGSPSASRQKKLWLQEHIDLRFPHQHVSTASVLGSHLCWGSLYLLGDWPEPTWPTVHVSGTESPHWLVKSPDPVCQGWILRQVGPQAEAIWQQFGQVVQQLAAAQRSSSQGW.

Belongs to the UreD family. As to quaternary structure, ureD, UreF and UreG form a complex that acts as a GTP-hydrolysis-dependent molecular chaperone, activating the urease apoprotein by helping to assemble the nickel containing metallocenter of UreC. The UreE protein probably delivers the nickel.

The protein localises to the cytoplasm. In terms of biological role, required for maturation of urease via the functional incorporation of the urease nickel metallocenter. In Synechococcus sp. (strain JA-3-3Ab) (Cyanobacteria bacterium Yellowstone A-Prime), this protein is Urease accessory protein UreD 2.